A 185-amino-acid chain; its full sequence is Elongation factor P (185 aa).

The protein belongs to the elongation factor P family.

It is found in the cytoplasm. It participates in protein biosynthesis; polypeptide chain elongation. Functionally, involved in peptide bond synthesis. Stimulates efficient translation and peptide-bond synthesis on native or reconstituted 70S ribosomes in vitro. Probably functions indirectly by altering the affinity of the ribosome for aminoacyl-tRNA, thus increasing their reactivity as acceptors for peptidyl transferase. The sequence is that of Elongation factor P from Bordetella avium (strain 197N).